The sequence spans 548 residues: Probable 2,3-bisphosphoglycerate-independent phosphoglycerate mutase (548 aa).

Residues Asp-20 and Ser-73 each contribute to the Mn(2+) site. Ser-73 functions as the Phosphoserine intermediate in the catalytic mechanism. Residues His-134, 164 to 165, Arg-200, Arg-207, 279 to 282, and Lys-354 each bind substrate; these read RD and RGDR. The Mn(2+) site is built by Asp-422, His-426, Asp-463, His-464, and His-493.

It belongs to the BPG-independent phosphoglycerate mutase family. As to quaternary structure, monomer. The cofactor is Mn(2+).

It catalyses the reaction (2R)-2-phosphoglycerate = (2R)-3-phosphoglycerate. The protein operates within carbohydrate degradation; glycolysis; pyruvate from D-glyceraldehyde 3-phosphate: step 3/5. Its function is as follows. Catalyzes the interconversion of 2-phosphoglycerate and 3-phosphoglycerate. The sequence is that of Probable 2,3-bisphosphoglycerate-independent phosphoglycerate mutase (gpmI) from Leptospira interrogans serogroup Icterohaemorrhagiae serovar Lai (strain 56601).